Here is a 146-residue protein sequence, read N- to C-terminus: Small RNA-binding protein 11, chloroplastic (146 aa).

A chloroplast-targeting transit peptide spans 1 to 31; it reads MAALARIGGRHLKSVCLINSSASCFFTQRRG. The RRM domain maps to 34–112; that stretch reads SKLFIGGLSF…RTIFVDYAKA (79 aa). Ser-42 bears the Phosphoserine mark.

Expressed in rosette leaves, cauline leaves, stems and flowers.

It localises to the plastid. It is found in the chloroplast. Probable RNA-binding protein that may be involved in salt and oxidative stress tolerance. In Arabidopsis thaliana (Mouse-ear cress), this protein is Small RNA-binding protein 11, chloroplastic.